Here is a 594-residue protein sequence, read N- to C-terminus: KIF-binding protein (594 aa).

Belongs to the KIF-binding protein family.

It localises to the cytoplasm. It is found in the cytoskeleton. In terms of biological role, activator of KIF1B plus-end-directed microtubule motor activity. Required for organization of axonal microtubules, and axonal outgrowth and maintenance during peripheral and central nervous system development. This is KIF-binding protein (Kifbp) from Gallus gallus (Chicken).